Consider the following 129-residue polypeptide: RxLR effector protein PexRD43 (129 aa).

The first 16 residues, 1 to 16, serve as a signal peptide directing secretion; it reads MRLAMILLSIPLFVSG. The RxLR-dEER signature appears at 44 to 56; sequence RSLRTSGEANEER.

Belongs to the RxLR effector family.

It localises to the secreted. It is found in the host cytoplasm. Its subcellular location is the host nucleus. Effector that enhances P.infestans colonization of Nicotiana benthamiana leaves. This is RxLR effector protein PexRD43 from Phytophthora infestans (strain T30-4) (Potato late blight agent).